Here is a 443-residue protein sequence, read N- to C-terminus: Phosphoglucosamine mutase (443 aa).

Catalysis depends on serine 101, which acts as the Phosphoserine intermediate. Residues serine 101, aspartate 239, aspartate 241, and aspartate 243 each contribute to the Mg(2+) site. Serine 101 bears the Phosphoserine mark.

Belongs to the phosphohexose mutase family. Mg(2+) serves as cofactor. Post-translationally, activated by phosphorylation.

The enzyme catalyses alpha-D-glucosamine 1-phosphate = D-glucosamine 6-phosphate. Its function is as follows. Catalyzes the conversion of glucosamine-6-phosphate to glucosamine-1-phosphate. This chain is Phosphoglucosamine mutase, found in Francisella philomiragia subsp. philomiragia (strain ATCC 25017 / CCUG 19701 / FSC 153 / O#319-036).